The chain runs to 147 residues: Hemoglobin subunit delta (147 aa).

Positions 3–147 constitute a Globin domain; sequence HLTADETALV…VANALAHKYH (145 aa). Residue S51 is modified to Phosphoserine. The heme b site is built by H64 and H93.

The protein belongs to the globin family. Heterotetramer of two delta chains and two alpha chains. As to expression, red blood cells.

The protein is Hemoglobin subunit delta (HBD) of Dugong dugon (Dugong).